Consider the following 349-residue polypeptide: 2-oxoglutarate and iron-dependent oxygenase domain-containing protein 2 (349 aa).

A Fe2OG dioxygenase domain is found at 211–305; sequence DSHRAFVVKY…RWNLILWMRA (95 aa). 3 residues coordinate Fe cation: histidine 231, aspartate 233, and histidine 286. Arginine 296 is a binding site for 2-oxoglutarate.

The protein belongs to the OGFOD2 family. The cofactor is Fe(2+). L-ascorbate is required as a cofactor.

This chain is 2-oxoglutarate and iron-dependent oxygenase domain-containing protein 2 (ogfod2), found in Xenopus tropicalis (Western clawed frog).